The following is a 316-amino-acid chain: Methionyl-tRNA formyltransferase (316 aa).

113 to 116 (SLLP) provides a ligand contact to (6S)-5,6,7,8-tetrahydrofolate.

The protein belongs to the Fmt family.

The enzyme catalyses L-methionyl-tRNA(fMet) + (6R)-10-formyltetrahydrofolate = N-formyl-L-methionyl-tRNA(fMet) + (6S)-5,6,7,8-tetrahydrofolate + H(+). Attaches a formyl group to the free amino group of methionyl-tRNA(fMet). The formyl group appears to play a dual role in the initiator identity of N-formylmethionyl-tRNA by promoting its recognition by IF2 and preventing the misappropriation of this tRNA by the elongation apparatus. In Sodalis glossinidius (strain morsitans), this protein is Methionyl-tRNA formyltransferase.